We begin with the raw amino-acid sequence, 1838 residues long: Collagen alpha-1(V) chain (1838 aa).

The N-terminal stretch at 1-36 (MDVHTRWKAARPGALLLSSPLLLFLLLLWAPPSSRA) is a signal peptide. A Laminin G-like domain is found at 72-244 (DVAYRVSKDA…DYCEHYSPDC (173 aa)). The tract at residues 231-443 (RAAYDYCEHY…MPANQDTIFE (213 aa)) is nonhelical region. Tyr-234, Tyr-236, Tyr-240, Tyr-262, and Tyr-263 each carry sulfotyrosine. Disordered stretches follow at residues 242–545 (PDCD…QESQ) and 559–1574 (GPAG…EVIQ). Residues 258–268 (NPDEYYPEGEG) show a composition bias toward acidic residues. 4 stretches are compositionally biased toward low complexity: residues 335 to 345 (DYDYVPPDDYY), 374 to 387 (VPTSTTVTSNTSNP), 413 to 428 (YDPYFDPDSDSSVSPS), and 460 to 469 (IIEPGMLIEG). An interrupted collagenous region region spans residues 444–558 (GIGGPRGEKG…ILQQARLALR (115 aa)). Pro residues predominate over residues 470 to 485 (PPGPEGPAGLPGPPGT). Composition is skewed to low complexity over residues 506–523 (LPGADGLPGPPGTMLMLP) and 559–570 (GPAGPMGLTGRP). A triple-helical region region spans residues 559–1570 (GPAGPMGLTG…GLPGPPGPPG (1012 aa)). Residues Pro-570, Pro-576, and Pro-621 each carry the 4-hydroxyproline modification. Lys-627 carries the 5-hydroxylysine modification. At Pro-639 the chain carries 4-hydroxyproline. Lys-642 bears the 5-hydroxylysine mark. Pro-648, Pro-654, Pro-657, Pro-675, and Pro-678 each carry 4-hydroxyproline. A compositionally biased stretch (low complexity) spans 671–686 (PRGLPGEPGPRGLLGP). Residues Pro-680 and Pro-686 each carry the 3-hydroxyproline modification. Residues 687-696 (KGPPGPPGPP) are compositionally biased toward pro residues. Residues Pro-690, Pro-696, and Pro-705 each carry the 4-hydroxyproline modification. Lys-708 is modified (5-hydroxylysine). Pro-717, Pro-720, Pro-726, and Pro-732 each carry 4-hydroxyproline. Positions 722–741 (QQGNPGAQGLPGPQGAIGPP) are enriched in low complexity. Lys-744 is modified (5-hydroxylysine). Positions 747–756 (LGKPGLPGMP) are enriched in low complexity. 5 positions are modified to 4-hydroxyproline: Pro-750, Pro-756, Pro-762, Pro-765, and Pro-771. Lys-774 is modified (5-hydroxylysine). 4-hydroxyproline is present on residues Pro-780 and Pro-789. A 5-hydroxylysine mark is found at Lys-795, Lys-804, Lys-807, and Lys-810. The residue at position 816 (Pro-816) is a 4-hydroxyproline. Residue Lys-819 is modified to 5-hydroxylysine. Position 834 is a 4-hydroxyproline (Pro-834). Residues 837–846 (RGEDGPEGPK) are compositionally biased toward basic and acidic residues. 2 positions are modified to 5-hydroxylysine: Lys-846 and Lys-864. 4-hydroxyproline occurs at positions 870, 873, and 876. Lys-882 bears the 5-hydroxylysine mark. 4-hydroxyproline is present on residues Pro-888 and Pro-891. The residue at position 897 (Lys-897) is a 5-hydroxylysine. Residues Pro-903 and Pro-906 each carry the 4-hydroxyproline modification. Residues 908–917 (PRGQRGPTGP) are compositionally biased toward low complexity. Residues Pro-930 and Pro-945 each carry the 4-hydroxyproline modification. Composition is skewed to low complexity over residues 971–990 (KDGLPGHPGQRGETGFQGKT) and 999–1011 (VGPQGPTGETGPM). A 4-hydroxyproline mark is found at Pro-1017, Pro-1020, Pro-1023, and Pro-1029. Positions 1088–1104 (SPGERGPAGAAGPIGIP) are enriched in low complexity. The segment covering 1106 to 1115 (RPGPQGPPGP) has biased composition (pro residues). Residues Pro-1221 and Pro-1224 each carry the 4-hydroxyproline modification. The span at 1259 to 1268 (PSGAPGADGP) shows a compositional bias: low complexity. Residues 1294–1303 (GLPGEGGPLG) are compositionally biased toward gly residues. Composition is skewed to pro residues over residues 1380-1398 (TGEPGPSGPPGKRGPPGPA) and 1454-1469 (SPGPDGPPGPMGPPGL). 4-hydroxyproline is present on residues Pro-1467 and Pro-1470. The segment covering 1485 to 1494 (PGLIGLIGPP) has biased composition (low complexity). Pro residues predominate over residues 1526–1541 (PLGPPGPPGLPGPPGP). Residues 1542 to 1554 (KGAKGSSGPTGPK) are compositionally biased toward low complexity. Positions 1571–1605 (EVIQPLPIQASRTRRNIDASQLLDDGAGESYVDYA) are nonhelical region. A sulfotyrosine mark is found at Tyr-1601 and Tyr-1604. The Fibrillar collagen NC1 domain occupies 1609-1837 (EEIFGSLNSL…GFEVGPACFL (229 aa)).

It belongs to the fibrillar collagen family. As to quaternary structure, trimers of two alpha 1(V) and one alpha 2(V) chains in most tissues and trimers of one alpha 1(V), one alpha 2(V), and one alpha 3(V) chains in placenta. Interacts with CSPG4. Post-translationally, hydroxylation on proline residues within the sequence motif, GXPG, is most likely to be 4-hydroxy as this fits the requirement for 4-hydroxylation in vertebrates. Sulfated on 40% of tyrosines. As to expression, widely expressed. Isoform 2 is more highly expressed in liver, kidney and lung.

The protein resides in the secreted. The protein localises to the extracellular space. It is found in the extracellular matrix. In terms of biological role, type V collagen is a member of group I collagen (fibrillar forming collagen). It is a minor connective tissue component of nearly ubiquitous distribution. Type V collagen binds to DNA, heparan sulfate, thrombospondin, heparin, and insulin. Transcriptionally activated by CEBPZ, which recognizes a CCAAT-like motif, CAAAT in the COL5A1 promoter. The chain is Collagen alpha-1(V) chain (Col5a1) from Mus musculus (Mouse).